The chain runs to 149 residues: Putative pre-16S rRNA nuclease (149 aa).

The protein belongs to the YqgF nuclease family.

It localises to the cytoplasm. Could be a nuclease involved in processing of the 5'-end of pre-16S rRNA. The sequence is that of Putative pre-16S rRNA nuclease from Burkholderia multivorans (strain ATCC 17616 / 249).